The chain runs to 342 residues: C-X-C chemokine receptor type 6 (342 aa).

The Extracellular portion of the chain corresponds to 1–32 (MAEYDHYEDNGFNSFNDSSQEEHQDFLQFSKV). N16 carries an N-linked (GlcNAc...) asparagine glycan. The helical transmembrane segment at 33 to 59 (FLPCMYLVVFVCGLVGNSLVLVISIFY) threads the bilayer. Over 60–68 (HKLQSLTDV) the chain is Cytoplasmic. The helical transmembrane segment at 69 to 89 (FLVNLPLADLVFVCTLPFWAY) threads the bilayer. Residues 90-103 (AGIHEWIFGQVMCK) are Extracellular-facing. A disulfide bond links C102 and C180. A helical transmembrane segment spans residues 104–125 (TLLGIYTINFYTSMLILTCITV). Topologically, residues 126-143 (DRFIVVVKATKAYNQQAK) are cytoplasmic. Residues 144–164 (KMTWGKVICLLIWVISLLVSL) traverse the membrane as a helical segment. Residues 165–187 (PQIIYGNVFNLDKLICGYHDEEI) lie on the Extracellular side of the membrane. Residues 188–215 (STVVLATQMTLGFFLPLLAMIVCYSVII) traverse the membrane as a helical segment. Residues 216–231 (KTLLHAGGFQKHRSLK) lie on the Cytoplasmic side of the membrane. Residues 232 to 259 (IIFLVMAVFLLTQTPFNLVKLIRSTHWE) form a helical membrane-spanning segment. Residues 260 to 275 (YYAMTSFHYTIIVTEA) are Extracellular-facing. Residues 276-293 (IAYLRACLNPVLYAFVSL) form a helical membrane-spanning segment. Residues 294–342 (KFRKNFWKLVKDIGCLPYLGVSHQWKSSEDNSKTFSASHNVEATSMFQL) lie on the Cytoplasmic side of the membrane.

This sequence belongs to the G-protein coupled receptor 1 family.

The protein resides in the cell membrane. Its function is as follows. Receptor for the C-X-C chemokine CXCL16. Used as a coreceptor by SIVs and by strains of HIV-2 and m-tropic HIV-1. In Chlorocebus aethiops (Green monkey), this protein is C-X-C chemokine receptor type 6 (CXCR6).